A 213-amino-acid polypeptide reads, in one-letter code: Redox-sensing transcriptional repressor Rex (213 aa).

The segment at residues 16 to 55 (VYSRFLERMDRNGIVTVSSGEIAEGVGVSSAQVRKDLAYF) is a DNA-binding region (H-T-H motif). 90–95 (GAGNLG) is a binding site for NAD(+).

Belongs to the transcriptional regulatory Rex family. As to quaternary structure, homodimer.

The protein resides in the cytoplasm. Modulates transcription in response to changes in cellular NADH/NAD(+) redox state. This chain is Redox-sensing transcriptional repressor Rex, found in Pelotomaculum thermopropionicum (strain DSM 13744 / JCM 10971 / SI).